The chain runs to 516 residues: Putative sel1-like repeat-containing protein R850 (516 aa).

Sel1-like repeat units lie at residues 103–138 (ALTYNNLGFIYHNDIFKKNKVIKVISHYCKAVNMNS) and 230–265 (SISQYSIGTKYLGGDVTNRKYQKGIIYLKNSAKQGD).

This is Putative sel1-like repeat-containing protein R850 from Acanthamoeba polyphaga (Amoeba).